The sequence spans 529 residues: Peptide chain release factor 3 (529 aa).

The tr-type G domain occupies 11-280 (SKRRTFAIIS…GLTEWAPAPK (270 aa)). GTP contacts are provided by residues 20–27 (SHPDAGKT), 88–92 (DTPGH), and 142–145 (NKLD).

It belongs to the TRAFAC class translation factor GTPase superfamily. Classic translation factor GTPase family. PrfC subfamily.

The protein localises to the cytoplasm. Increases the formation of ribosomal termination complexes and stimulates activities of RF-1 and RF-2. It binds guanine nucleotides and has strong preference for UGA stop codons. It may interact directly with the ribosome. The stimulation of RF-1 and RF-2 is significantly reduced by GTP and GDP, but not by GMP. The protein is Peptide chain release factor 3 of Vibrio campbellii (strain ATCC BAA-1116).